The chain runs to 238 residues: Probable transcriptional regulatory protein YeeN (238 aa).

Belongs to the TACO1 family. YeeN subfamily.

The protein localises to the cytoplasm. The sequence is that of Probable transcriptional regulatory protein YeeN from Salmonella typhi.